Reading from the N-terminus, the 231-residue chain is High-affinity zinc uptake system ATP-binding protein ZnuC (231 aa).

Residues 4–230 (VSLKDIVFGY…CLTWNSCDEL (227 aa)) form the ABC transporter domain.

This sequence belongs to the ABC transporter superfamily. As to quaternary structure, the complex is composed of two ATP-binding proteins (ZnuC), two transmembrane proteins (ZnuB) and a solute-binding protein (ZnuA).

It localises to the cell membrane. It catalyses the reaction Zn(2+)(out) + ATP(in) + H2O(in) = Zn(2+)(in) + ADP(in) + phosphate(in) + H(+)(in). Its function is as follows. Part of the high-affinity ABC transporter complex ZnuABC involved in zinc import. Responsible for energy coupling to the transport system. ZnuABC-mediated zinc transport is required for comF expression and competence development. This Bacillus subtilis (strain 168) protein is High-affinity zinc uptake system ATP-binding protein ZnuC (znuC).